The following is a 682-amino-acid chain: Putative L-type lectin-domain containing receptor kinase I.1 (682 aa).

Positions 1–19 (MAQRLHLLLLLFLICFVNL) are cleaved as a signal peptide. The Extracellular segment spans residues 20 to 292 (ISFSSQQDLS…RPKKPEKTSP (273 aa)). The legume-lectin like stretch occupies residues 27-264 (DLSFIYNGFN…YQYILGWSFS (238 aa)). Residues asparagine 60, asparagine 130, asparagine 187, asparagine 210, and asparagine 231 are each glycosylated (N-linked (GlcNAc...) asparagine). The helical transmembrane segment at 293 to 313 (LLIVLLIILAIIVMVVVGGFY) threads the bilayer. Residues 314–682 (LYRRKKYAEV…SHTIIYGDGR (369 aa)) are Cytoplasmic-facing. The Protein kinase domain occupies 348–622 (FNKDGRLGRG…VQYINRHQRL (275 aa)). Residues 354–362 (LGRGGFGEV) and lysine 376 each bind ATP. The Proton acceptor role is filled by aspartate 472.

It in the C-terminal section; belongs to the protein kinase superfamily. Ser/Thr protein kinase family. This sequence in the N-terminal section; belongs to the leguminous lectin family.

It is found in the cell membrane. It carries out the reaction L-seryl-[protein] + ATP = O-phospho-L-seryl-[protein] + ADP + H(+). The enzyme catalyses L-threonyl-[protein] + ATP = O-phospho-L-threonyl-[protein] + ADP + H(+). Functionally, involved in resistance response to the pathogenic fungus Alternaria brassicicola. The protein is Putative L-type lectin-domain containing receptor kinase I.1 of Arabidopsis thaliana (Mouse-ear cress).